A 172-amino-acid chain; its full sequence is 3-phenylpropionate/cinnamic acid dioxygenase subunit beta (172 aa).

It belongs to the bacterial ring-hydroxylating dioxygenase beta subunit family. This dioxygenase system consists of four proteins: the two subunits of the hydroxylase component (HcaE and HcaF), a ferredoxin (HcaC) and a ferredoxin reductase (HcaD).

The enzyme catalyses 3-phenylpropanoate + NADH + O2 + H(+) = 3-(cis-5,6-dihydroxycyclohexa-1,3-dien-1-yl)propanoate + NAD(+). It carries out the reaction (E)-cinnamate + NADH + O2 + H(+) = (2E)-3-(cis-5,6-dihydroxycyclohexa-1,3-dien-1-yl)prop-2-enoate + NAD(+). It participates in aromatic compound metabolism; 3-phenylpropanoate degradation. In terms of biological role, part of the multicomponent 3-phenylpropionate dioxygenase. Converts 3-phenylpropionic acid (PP) and cinnamic acid (CI) into 3-phenylpropionate-dihydrodiol (PP-dihydrodiol) and cinnamic acid-dihydrodiol (CI-dihydrodiol), respectively. This Escherichia coli O157:H7 protein is 3-phenylpropionate/cinnamic acid dioxygenase subunit beta.